The primary structure comprises 610 residues: Protein Smaug homolog 1 (610 aa).

Position 67 is a phosphoserine (Ser67). Disordered regions lie at residues 177–222 (ARGP…EEGS), 318–366 (SSPS…LQPP), and 464–487 (NRGFGQSNSLPTASSVGSGMGRRN). The region spanning 222 to 295 (SGMKDVPAWL…LKSLERDIIE (74 aa)) is the SAM domain. Ser319 carries the phosphoserine modification. Thr323 is subject to Phosphothreonine. Positions 344 to 358 (SAATVTSATASASAG) are enriched in low complexity. Arg465 carries the post-translational modification Omega-N-methylarginine. The segment covering 467–480 (FGQSNSLPTASSVG) has biased composition (polar residues). Ser472 is subject to Phosphoserine.

The protein belongs to the SMAUG family. Expressed in brain (at protein level).

The protein resides in the cytoplasm. It localises to the cell projection. The protein localises to the dendrite. Its subcellular location is the synapse. It is found in the synaptosome. Acts as a translational repressor of SRE-containing messengers. In Rattus norvegicus (Rat), this protein is Protein Smaug homolog 1 (Samd4a).